Reading from the N-terminus, the 147-residue chain is UPF0178 protein IL2341 (147 aa).

Belongs to the UPF0178 family.

The polypeptide is UPF0178 protein IL2341 (Idiomarina loihiensis (strain ATCC BAA-735 / DSM 15497 / L2-TR)).